The primary structure comprises 609 residues: Mitogen-activated protein kinase kinase kinase 3 (609 aa).

A disordered region spans residues 1 to 202 (MPTWWGRKSC…SAVHGSRIGG (202 aa)). Residues 11–28 (KNKDDNHRGIISTDRDIK) show a composition bias toward basic and acidic residues. Composition is skewed to low complexity over residues 40–64 (PTRG…GFDS) and 90–108 (VSGS…SSGS). Positions 214 to 470 (WKKGKFLGSG…ASQLLEHPFL (257 aa)) constitute a Protein kinase domain. Residues 220–228 (LGSGTFGQV) and K243 each bind ATP. D339 functions as the Proton acceptor in the catalytic mechanism. 2 disordered regions span residues 487 to 511 (PRSY…SHDN) and 590 to 609 (MEPS…SRLV). The span at 594–609 (SFRTQTPNSPLRSRLV) shows a compositional bias: polar residues.

Belongs to the protein kinase superfamily. STE Ser/Thr protein kinase family. MAP kinase kinase kinase subfamily. In terms of assembly, interacts with PBL27. In terms of tissue distribution, expressed in flower buds, roots, leaves, seedlings, stems and immature siliques. Absent of mature pollen.

It catalyses the reaction L-seryl-[protein] + ATP = O-phospho-L-seryl-[protein] + ADP + H(+). It carries out the reaction L-threonyl-[protein] + ATP = O-phospho-L-threonyl-[protein] + ADP + H(+). This chain is Mitogen-activated protein kinase kinase kinase 3, found in Arabidopsis thaliana (Mouse-ear cress).